Reading from the N-terminus, the 230-residue chain is Large ribosomal subunit protein uL1 (230 aa).

Belongs to the universal ribosomal protein uL1 family. As to quaternary structure, part of the 50S ribosomal subunit.

Functionally, binds directly to 23S rRNA. The L1 stalk is quite mobile in the ribosome, and is involved in E site tRNA release. Protein L1 is also a translational repressor protein, it controls the translation of the L11 operon by binding to its mRNA. This Methylobacillus flagellatus (strain ATCC 51484 / DSM 6875 / VKM B-1610 / KT) protein is Large ribosomal subunit protein uL1.